The primary structure comprises 1235 residues: Chitin synthase 4 (1235 aa).

The segment covering 1 to 11 has biased composition (pro residues); sequence MSLPRRPGPSP. Residues 1-203 are disordered; it reads MSLPRRPGPS…ASKGKREKSG (203 aa). Over 1–212 the chain is Cytoplasmic; it reads MSLPRRPGPS…GGLPTPSFWN (212 aa). Positions 19-28 are enriched in basic residues; sequence YRQSGSRRSR. A compositionally biased stretch (polar residues) spans 46 to 59; sequence PSQQQRVPSISSFP. Residues 94-107 are compositionally biased toward basic and acidic residues; sequence IRPERNRIGKDHPN. Positions 116–125 are enriched in polar residues; the sequence is NMNTLPSSTG. The segment covering 169-187 has biased composition (basic and acidic residues); the sequence is ETEKSGDERRRRRKSDTTK. Over residues 188 to 199 the composition is skewed to basic residues; it reads HGKIVKASKGKR. Residues 213–233 form a helical membrane-spanning segment; sequence IYCGFVTFWCPGFVLKCFGMP. Over 234–244 the chain is Extracellular; the sequence is EMAQQRAWREK. The chain crosses the membrane as a helical span at residues 245 to 265; the sequence is MGLISIILLIMGFVGFITFGF. The Cytoplasmic segment spans residues 266–514; sequence TQVVCGKPPL…ASKVVLYVSL (249 aa). Residues 515-535 form a helical membrane-spanning segment; the sequence is VLILAVVLARFVLALIFQWFI. The Extracellular segment spans residues 536-1065; it reads SKTYAAAKTS…SMQFIVGIEL (530 aa). The interval 545–592 is disordered; sequence SQTSDQRKRNRQIEDWTEDIYRAPPRLPGEVGSSVAGSSDRQSKRSSA. The segment covering 549 to 558 has biased composition (basic and acidic residues); that stretch reads DQRKRNRQIE. Asn-639 is a glycosylation site (N-linked (GlcNAc...) asparagine). Positions 645-670 are disordered; sequence FLKSDAYGSSSSPADGPGPAGFIHEA. Residues 648 to 665 are compositionally biased toward low complexity; the sequence is SDAYGSSSSPADGPGPAG. N-linked (GlcNAc...) asparagine glycosylation occurs at Asn-1034. A helical transmembrane segment spans residues 1066–1086; that stretch reads IGTLVLPAAIAFTFYVVIISI. Topologically, residues 1087–1092 are cytoplasmic; it reads INSPPQ. The helical transmembrane segment at 1093–1113 threads the bilayer; sequence IIPLVLLGLILGLPAILVVVT. At 1114 to 1116 the chain is on the extracellular side; the sequence is AHS. The chain crosses the membrane as a helical span at residues 1117–1137; it reads WSYIIWMFIYLLSLPVWNFVL. Residues 1138–1235 lie on the Cytoplasmic side of the membrane; that stretch reads PTYAFWKFDD…RHFDDYFSDA (98 aa). The segment at 1201–1235 is disordered; that stretch reads RDNVISGVGGSNGWGSSQPRGHEQGRHFDDYFSDA. Residues 1220–1235 show a composition bias toward basic and acidic residues; sequence RGHEQGRHFDDYFSDA.

It belongs to the chitin synthase family. Class IV subfamily.

Its subcellular location is the cell membrane. The enzyme catalyses [(1-&gt;4)-N-acetyl-beta-D-glucosaminyl](n) + UDP-N-acetyl-alpha-D-glucosamine = [(1-&gt;4)-N-acetyl-beta-D-glucosaminyl](n+1) + UDP + H(+). Functionally, polymerizes chitin, a structural polymer of the cell wall and septum, by transferring the sugar moiety of UDP-GlcNAc to the non-reducing end of the growing chitin polymer. The sequence is that of Chitin synthase 4 (chs-4) from Neurospora crassa (strain ATCC 24698 / 74-OR23-1A / CBS 708.71 / DSM 1257 / FGSC 987).